The sequence spans 291 residues: Bifunctional protein FolD (291 aa).

Residues Gly173–Ser175 and Ser198 contribute to the NADP(+) site.

This sequence belongs to the tetrahydrofolate dehydrogenase/cyclohydrolase family. Homodimer.

It carries out the reaction (6R)-5,10-methylene-5,6,7,8-tetrahydrofolate + NADP(+) = (6R)-5,10-methenyltetrahydrofolate + NADPH. The enzyme catalyses (6R)-5,10-methenyltetrahydrofolate + H2O = (6R)-10-formyltetrahydrofolate + H(+). It functions in the pathway one-carbon metabolism; tetrahydrofolate interconversion. In terms of biological role, catalyzes the oxidation of 5,10-methylenetetrahydrofolate to 5,10-methenyltetrahydrofolate and then the hydrolysis of 5,10-methenyltetrahydrofolate to 10-formyltetrahydrofolate. The polypeptide is Bifunctional protein FolD (Psychrobacter sp. (strain PRwf-1)).